Reading from the N-terminus, the 252-residue chain is Hydrolase phiM (252 aa).

The active-site Charge relay system is the S126.

This sequence belongs to the LovG family.

Its pathway is secondary metabolite biosynthesis. Hydrolase; part of the gene cluster that mediates the biosynthesis of the antihypercholesterolemic agents phomoidrides which are dimeric anhydrides. Within the pathway, phiM releases the C12-fatty acyl chain from phiA. The pathway begins with the highly reducing polyketide synthase tstA that catalyzes the formation of a C12-fatty acyl-ACP, starting from one acetate and 5 malonate units. The hydrolase tstM is involved in the release of the C12-fatty acyl chain from phiA. The alkylcitrate synthase (ACS) tstJ and the alkylcitrate dehydratase (ACDH) tstI then give rise to decarboxylated monomeric anhydrides by coupling the C12-fatty acyl chain with oxalacetic acid. The cyclase tstC is responsible for the dimerization of the monomeric anhydrides which leads to the production of prephomoidride that contains the characteristic bicyclo[4.3.1]deca-1,6-diene system of phomoidrides. Iterative oxidation catalyzed by the alpha-ketoglutarate-dependent dioxygenase tstK produced then phomoidride A. Finally, the methyltransferase tstE converts phomoidride A to phomoidride B via an acetalization reaction. The phosphatidylethanolamine-binding protein tstB and tstN are not essential for dimerization and their functions have still to be determined. The chain is Hydrolase phiM from Talaromyces stipitatus (strain ATCC 10500 / CBS 375.48 / QM 6759 / NRRL 1006) (Penicillium stipitatum).